A 160-amino-acid chain; its full sequence is MGDKIAVIPGTFDPITNGHLDIIERAAKIFDVLYVSVLNNSSKKPLFTIEERMEMIRQVTAHLPNVQVESASGLTVDYAATRGATAIVRGLRAVSDFEYEMQIASMNRTLNADIETFFVMTNTKYSFLSSSMVKEVAQYQGDISELVPEIVNKAVQAKFK.

Thr-11 is a binding site for substrate. ATP is bound by residues 11 to 12 and His-19; that span reads TF. Residues Lys-43, Thr-75, and Arg-89 each contribute to the substrate site. Residues 90 to 92, Glu-100, and 125 to 131 contribute to the ATP site; these read GLR and YSFLSSS.

The protein belongs to the bacterial CoaD family. As to quaternary structure, homohexamer. Mg(2+) is required as a cofactor.

Its subcellular location is the cytoplasm. It carries out the reaction (R)-4'-phosphopantetheine + ATP + H(+) = 3'-dephospho-CoA + diphosphate. It functions in the pathway cofactor biosynthesis; coenzyme A biosynthesis; CoA from (R)-pantothenate: step 4/5. Reversibly transfers an adenylyl group from ATP to 4'-phosphopantetheine, yielding dephospho-CoA (dPCoA) and pyrophosphate. This Listeria monocytogenes serovar 1/2a (strain ATCC BAA-679 / EGD-e) protein is Phosphopantetheine adenylyltransferase.